The chain runs to 502 residues: Putative F-box/FBD/LRR-repeat protein At5g22610 (502 aa).

One can recognise an F-box domain in the interval 17-63 (EDLISKLPEVLLSQILSYLPTKDIVRTSVLSKRWKSVWLLIPGLDLD). 7 LRR repeats span residues 70–98 (YDTF…KLSI), 99–127 (QKNE…DVEF), 147–180 (CKTL…CLEE), 181–206 (NVYS…TIVK), 208–228 (DDNV…SVGY), 238–263 (YYYD…TFNN), and 344–373 (SVWL…VLET). The FBD domain occupies 384–435 (VERRVSSVPECLLSSLEFVEIKNRISVDDGALEVARYFVENSVNLQKVVLRL).

In Arabidopsis thaliana (Mouse-ear cress), this protein is Putative F-box/FBD/LRR-repeat protein At5g22610.